The following is a 156-amino-acid chain: tRNA (cytidine(34)-2'-O)-methyltransferase (156 aa).

S-adenosyl-L-methionine-binding residues include G102, L124, and S132.

This sequence belongs to the class IV-like SAM-binding methyltransferase superfamily. RNA methyltransferase TrmH family. TrmL subfamily. As to quaternary structure, homodimer.

It localises to the cytoplasm. The enzyme catalyses cytidine(34) in tRNA + S-adenosyl-L-methionine = 2'-O-methylcytidine(34) in tRNA + S-adenosyl-L-homocysteine + H(+). The catalysed reaction is 5-carboxymethylaminomethyluridine(34) in tRNA(Leu) + S-adenosyl-L-methionine = 5-carboxymethylaminomethyl-2'-O-methyluridine(34) in tRNA(Leu) + S-adenosyl-L-homocysteine + H(+). Functionally, methylates the ribose at the nucleotide 34 wobble position in the two leucyl isoacceptors tRNA(Leu)(CmAA) and tRNA(Leu)(cmnm5UmAA). Catalyzes the methyl transfer from S-adenosyl-L-methionine to the 2'-OH of the wobble nucleotide. The protein is tRNA (cytidine(34)-2'-O)-methyltransferase of Burkholderia pseudomallei (strain 1106a).